Reading from the N-terminus, the 110-residue chain is UPF0060 membrane protein AHA_2410 (110 aa).

4 helical membrane passes run 8-28 (GLFL…YLWL), 33-53 (SVWL…LLSL), 63-83 (AAYG…VDGI), and 87-107 (LWDL…MFAP).

This sequence belongs to the UPF0060 family.

It localises to the cell inner membrane. The chain is UPF0060 membrane protein AHA_2410 from Aeromonas hydrophila subsp. hydrophila (strain ATCC 7966 / DSM 30187 / BCRC 13018 / CCUG 14551 / JCM 1027 / KCTC 2358 / NCIMB 9240 / NCTC 8049).